We begin with the raw amino-acid sequence, 782 residues long: General transcription and DNA repair factor IIH helicase/translocase subunit XPB (782 aa).

Residues 1-11 (MGKRDRADRDK) are compositionally biased toward basic and acidic residues. 2 disordered regions span residues 1-51 (MGKR…ESGT) and 220-240 (ISKTAEGSGGPSTSRVTDPQG). The Nuclear localization signal signature appears at 6–18 (RADRDKKKSRKRH). The segment covering 21 to 30 (DEEDDEEDAP) has biased composition (acidic residues). Positions 327–488 (MFGNGRARSG…DLNFLIGPKL (162 aa)) constitute a Helicase ATP-binding domain. 340-347 (LPCGAGKS) serves as a coordination point for ATP. Positions 441–444 (DEVH) match the DEVH box motif. One can recognise a Helicase C-terminal domain in the interval 542–702 (RACQFLIKFH…LAGMEEEDLA (161 aa)). At S686 the chain carries Phosphoserine. Residue S751 is modified to Phosphoserine; by CK2.

It belongs to the helicase family. RAD25/XPB subfamily. In terms of assembly, component of the 7-subunit TFIIH core complex composed of XPB/ERCC3, XPD/ERCC2, GTF2H1, GTF2H2, GTF2H3, GTF2H4 and GTF2H5, which is active in NER. The core complex associates with the 3-subunit CDK-activating kinase (CAK) module composed of CCNH/cyclin H, CDK7 and MNAT1 to form the 10-subunit holoenzyme (holo-TFIIH) active in transcription. Interacts with PUF60. Interacts with ATF7IP. Interacts with KAT2A; leading to KAT2A recruitment to promoters and acetylation of histones. Part of TBP-based Pol II pre-initiation complex (PIC), in which Pol II core assembles with general transcription factors and other specific initiation factors including GTF2E1, GTF2E2, GTF2F1, GTF2F2, TCEA1, ERCC2, ERCC3, GTF2H2, GTF2H3, GTF2H4, GTF2H5, GTF2A1, GTF2A2, GTF2B and TBP; this large multi-subunit PIC complex mediates DNA unwinding and targets Pol II core to the transcription start site where the first phosphodiester bond forms. In terms of processing, phosphorylation on Ser-751 by CK2 controls the 5'-excision activity of ERCC1-XPF endonuclease; phosphorylated protein inhibits the excision activity and thus NER. Dephosphorylation reactivates the 5'-excision step. Phosphorylation has no effect on transcription or the 3'-5' helicase activity.

Its subcellular location is the nucleus. It catalyses the reaction Couples ATP hydrolysis with the unwinding of duplex DNA by translocating in the 3'-5' direction.. It carries out the reaction ATP + H2O = ADP + phosphate + H(+). Its activity is regulated as follows. Phosphorylation on Ser-751 by CK2 controls the 5'-excision activity of ERCC1-XPF endonuclease; phosphorylated protein inhibits the excision activity and thus NER. ATPase activity is stimulated by TFIIH subunit p52 (GTF2H4). DNA translocase activity by this subunit in TFIIH is stimulated by XPA, ERCC5/XPG and XFP plus ERCC1. ATP-dependent 3'-5' DNA helicase/translocase; binds dsDNA rather than ssDNA, unzipping it in a translocase rather than classical helicase activity. Component of the general transcription and DNA repair factor IIH (TFIIH) core complex. When complexed to CDK-activating kinase (CAK), involved in RNA transcription by RNA polymerase II. The ATPase activity of XPB/ERCC3, but not its helicase activity, is required for DNA opening; it may wrap around the damaged DNA wedging it open, causing localized melting and twisting that allows XPD/ERCC2 helicase to anchor. The ATP-dependent helicase activity of XPB/ERCC3 may be required for promoter escape. Also involved in transcription-coupled nucleotide excision repair (NER) of damaged DNA. In NER, TFIIH acts by opening DNA around the lesion to allow the excision of the damaged oligonucleotide and its replacement by a new DNA fragment. The structure of the TFIIH transcription complex differs from the NER-TFIIH complex; large movements by XPD/ERCC2 and XPB/ERCC3 are stabilized by XPA. The polypeptide is General transcription and DNA repair factor IIH helicase/translocase subunit XPB (ERCC3) (Macaca fascicularis (Crab-eating macaque)).